A 549-amino-acid polypeptide reads, in one-letter code: Tegument protein (549 aa).

Disordered stretches follow at residues 50–92 (KKKA…TASP), 353–391 (ETGD…CSSY), and 523–542 (TPIK…TRSP). 2 stretches are compositionally biased toward polar residues: residues 75 to 84 (PQALSVPSLS) and 356 to 369 (DCSS…QTHR). The span at 523 to 534 (TPIKTTSSSSPR) shows a compositional bias: low complexity.

Its function is as follows. This viral structural protein may have important functions, such as protein kinase activity, DNA binding, and possible transcriptional activation of immediate-early genes. This chain is Tegument protein, found in Homo sapiens (Human).